The primary structure comprises 173 residues: Crossover junction endodeoxyribonuclease RuvC (173 aa).

Residues D8, E67, and D139 contribute to the active site. Positions 8, 67, and 139 each coordinate Mg(2+).

Belongs to the RuvC family. As to quaternary structure, homodimer which binds Holliday junction (HJ) DNA. The HJ becomes 2-fold symmetrical on binding to RuvC with unstacked arms; it has a different conformation from HJ DNA in complex with RuvA. In the full resolvosome a probable DNA-RuvA(4)-RuvB(12)-RuvC(2) complex forms which resolves the HJ. Requires Mg(2+) as cofactor.

It is found in the cytoplasm. It carries out the reaction Endonucleolytic cleavage at a junction such as a reciprocal single-stranded crossover between two homologous DNA duplexes (Holliday junction).. In terms of biological role, the RuvA-RuvB-RuvC complex processes Holliday junction (HJ) DNA during genetic recombination and DNA repair. Endonuclease that resolves HJ intermediates. Cleaves cruciform DNA by making single-stranded nicks across the HJ at symmetrical positions within the homologous arms, yielding a 5'-phosphate and a 3'-hydroxyl group; requires a central core of homology in the junction. The consensus cleavage sequence is 5'-(A/T)TT(C/G)-3'. Cleavage occurs on the 3'-side of the TT dinucleotide at the point of strand exchange. HJ branch migration catalyzed by RuvA-RuvB allows RuvC to scan DNA until it finds its consensus sequence, where it cleaves and resolves the cruciform DNA. The protein is Crossover junction endodeoxyribonuclease RuvC of Vibrio atlanticus (strain LGP32) (Vibrio splendidus (strain Mel32)).